We begin with the raw amino-acid sequence, 301 residues long: D-alanine--D-alanine ligase (301 aa).

Residues 99 to 294 (KCILKAANIR…FPELIDMIID (196 aa)) form the ATP-grasp domain. An ATP-binding site is contributed by 126 to 181 (IEKMGYPVVVKPTHGGSSVATFIIKEEKDIKDAVIEGFKWDSEVIIEKFIKGDEIT). Mg(2+)-binding residues include aspartate 248, glutamate 261, and asparagine 263.

The protein belongs to the D-alanine--D-alanine ligase family. Mg(2+) serves as cofactor. Requires Mn(2+) as cofactor.

It is found in the cytoplasm. The catalysed reaction is 2 D-alanine + ATP = D-alanyl-D-alanine + ADP + phosphate + H(+). It functions in the pathway cell wall biogenesis; peptidoglycan biosynthesis. Functionally, cell wall formation. This Clostridium botulinum (strain Alaska E43 / Type E3) protein is D-alanine--D-alanine ligase.